The sequence spans 294 residues: Tryptophan 2,3-dioxygenase (294 aa).

Substrate-binding positions include 63–67 (FIIQH), Tyr125, and Arg129. A heme-binding site is contributed by His252. Thr266 lines the substrate pocket.

This sequence belongs to the tryptophan 2,3-dioxygenase family. In terms of assembly, homotetramer. Heme serves as cofactor.

The enzyme catalyses L-tryptophan + O2 = N-formyl-L-kynurenine. The protein operates within amino-acid degradation; L-tryptophan degradation via kynurenine pathway; L-kynurenine from L-tryptophan: step 1/2. In terms of biological role, heme-dependent dioxygenase that catalyzes the oxidative cleavage of the L-tryptophan (L-Trp) pyrrole ring and converts L-tryptophan to N-formyl-L-kynurenine. Catalyzes the oxidative cleavage of the indole moiety. The chain is Tryptophan 2,3-dioxygenase from Polaromonas sp. (strain JS666 / ATCC BAA-500).